We begin with the raw amino-acid sequence, 146 residues long: Hemoglobin subunit beta-2 (146 aa).

Positions 2–146 constitute a Globin domain; the sequence is GLTAHEKQLI…IADALGKGYH (145 aa). Residues His-63 and His-92 each contribute to the heme b site.

Belongs to the globin family. In terms of assembly, heterotetramer of two alpha chains and two beta chains. Red blood cells.

Involved in oxygen transport from the lung to the various peripheral tissues. The chain is Hemoglobin subunit beta-2 (hbb2) from Xenopus borealis (Kenyan clawed frog).